Reading from the N-terminus, the 410-residue chain is Inositol hexakisphosphate kinase 3 (410 aa).

211-219 (PCVLDLKMG) contributes to the substrate binding site. A disordered region spans residues 333 to 358 (QEPPERAPGSPHPHEAPQAAHGSSPG).

The protein belongs to the inositol phosphokinase (IPK) family. Detected in brain.

It is found in the cytoplasm. The enzyme catalyses 1D-myo-inositol hexakisphosphate + ATP = 5-diphospho-1D-myo-inositol 1,2,3,4,6-pentakisphosphate + ADP. It carries out the reaction 1-diphospho-1D-myo-inositol 2,3,4,5,6-pentakisphosphate + ATP + H(+) = 1,5-bis(diphospho)-1D-myo-inositol 2,3,4,6-tetrakisphosphate + ADP. In terms of biological role, converts inositol hexakisphosphate (InsP6) to diphosphoinositol pentakisphosphate (InsP7/PP-InsP5). Converts 1,3,4,5,6-pentakisphosphate (InsP5) to PP-InsP4. This is Inositol hexakisphosphate kinase 3 (IP6K3) from Homo sapiens (Human).